We begin with the raw amino-acid sequence, 491 residues long: UDP-N-acetylmuramate--L-alanine ligase (491 aa).

126-132 (GTHGKTT) is an ATP binding site.

Belongs to the MurCDEF family.

The protein resides in the cytoplasm. The catalysed reaction is UDP-N-acetyl-alpha-D-muramate + L-alanine + ATP = UDP-N-acetyl-alpha-D-muramoyl-L-alanine + ADP + phosphate + H(+). It participates in cell wall biogenesis; peptidoglycan biosynthesis. Functionally, cell wall formation. The polypeptide is UDP-N-acetylmuramate--L-alanine ligase (Escherichia coli (strain SE11)).